The sequence spans 452 residues: Pup--protein ligase (452 aa).

Glu9 contacts Mg(2+). Arg53 contacts ATP. Mg(2+) is bound at residue Tyr55. The active-site Proton acceptor is the Asp57. Glu63 is a Mg(2+) binding site. The ATP site is built by Thr66 and Trp419.

It belongs to the Pup ligase/Pup deamidase family. Pup-conjugating enzyme subfamily.

It carries out the reaction ATP + [prokaryotic ubiquitin-like protein]-L-glutamate + [protein]-L-lysine = ADP + phosphate + N(6)-([prokaryotic ubiquitin-like protein]-gamma-L-glutamyl)-[protein]-L-lysine.. It functions in the pathway protein degradation; proteasomal Pup-dependent pathway. It participates in protein modification; protein pupylation. Its function is as follows. Catalyzes the covalent attachment of the prokaryotic ubiquitin-like protein modifier Pup to the proteasomal substrate proteins, thereby targeting them for proteasomal degradation. This tagging system is termed pupylation. The ligation reaction involves the side-chain carboxylate of the C-terminal glutamate of Pup and the side-chain amino group of a substrate lysine. In Frankia alni (strain DSM 45986 / CECT 9034 / ACN14a), this protein is Pup--protein ligase.